The sequence spans 98 residues: NADH-ubiquinone oxidoreductase chain 4L (98 aa).

The next 3 membrane-spanning stretches (helical) occupy residues Met-1–Ile-21, Ser-29–Leu-49, and Ile-61–Ile-81.

This sequence belongs to the complex I subunit 4L family. Core subunit of respiratory chain NADH dehydrogenase (Complex I) which is composed of 45 different subunits.

It is found in the mitochondrion inner membrane. It carries out the reaction a ubiquinone + NADH + 5 H(+)(in) = a ubiquinol + NAD(+) + 4 H(+)(out). In terms of biological role, core subunit of the mitochondrial membrane respiratory chain NADH dehydrogenase (Complex I) which catalyzes electron transfer from NADH through the respiratory chain, using ubiquinone as an electron acceptor. Part of the enzyme membrane arm which is embedded in the lipid bilayer and involved in proton translocation. The polypeptide is NADH-ubiquinone oxidoreductase chain 4L (MT-ND4L) (Macaca maura (Moor macaque)).